We begin with the raw amino-acid sequence, 471 residues long: Cysteine--tRNA ligase (471 aa).

Cysteine 29 provides a ligand contact to Zn(2+). The short motif at 31–41 (PTVYNYIHIGN) is the 'HIGH' region element. Cysteine 209, histidine 234, and glutamate 238 together coordinate Zn(2+). Residues 266–270 (KMSKS) carry the 'KMSKS' region motif. Lysine 269 is an ATP binding site.

This sequence belongs to the class-I aminoacyl-tRNA synthetase family. Monomer. The cofactor is Zn(2+).

The protein localises to the cytoplasm. The catalysed reaction is tRNA(Cys) + L-cysteine + ATP = L-cysteinyl-tRNA(Cys) + AMP + diphosphate. The sequence is that of Cysteine--tRNA ligase from Listeria monocytogenes serotype 4b (strain CLIP80459).